We begin with the raw amino-acid sequence, 76 residues long: Exodeoxyribonuclease 7 small subunit (76 aa).

This sequence belongs to the XseB family. As to quaternary structure, heterooligomer composed of large and small subunits.

It localises to the cytoplasm. The enzyme catalyses Exonucleolytic cleavage in either 5'- to 3'- or 3'- to 5'-direction to yield nucleoside 5'-phosphates.. Bidirectionally degrades single-stranded DNA into large acid-insoluble oligonucleotides, which are then degraded further into small acid-soluble oligonucleotides. This is Exodeoxyribonuclease 7 small subunit from Geotalea uraniireducens (strain Rf4) (Geobacter uraniireducens).